A 429-amino-acid chain; its full sequence is MSKTHLTTDKFAQMGLEPEVLAGLESKGFHYCTPIQALSLPLLVEGHDLAGQAQTGTGKTLAFLAATFNYLLTHPLTKPRLINQPRAIIMAPTRELAVQIYNDAESMSASTGLKLGLAYGGEGYDKQLAVLEQGVDILIGTTGRIIDYFKSKVIDLSNIQVVVLDEADRMFDLGFIKDIRFLFRRMPPATERLSMLFSATLSLRVQELAYEHMNHPEHVQIEPEQMTGVRIKEELFYPSNEDKMLLLLSLMEEEWPEKAIVFANTKHVCEDVHAWLENDGHRVGLLTGDVPQKKRMKILEDFTKGTVDILVATDVAARGLHIPDVTHVFNYDLPDDAEDYVHRIGRTGRAGKSGHSISLACEDYAFNLPAIEEYIHHPIPVSKYDREALLDDVTAPKRVFRNRQPVNRNMRDRQGGGNSNNRRRPPRKS.

Residues 9–37 (DKFAQMGLEPEVLAGLESKGFHYCTPIQA) carry the Q motif motif. The 180-residue stretch at 40-219 (LPLLVEGHDL…YEHMNHPEHV (180 aa)) folds into the Helicase ATP-binding domain. Residue 53-60 (AQTGTGKT) coordinates ATP. Positions 165–168 (DEAD) match the DEAD box motif. The Helicase C-terminal domain occupies 243 to 390 (KMLLLLSLME…VSKYDREALL (148 aa)). Positions 399 to 429 (VFRNRQPVNRNMRDRQGGGNSNNRRRPPRKS) are disordered.

This sequence belongs to the DEAD box helicase family. RhlB subfamily. Component of the RNA degradosome, which is a multiprotein complex involved in RNA processing and mRNA degradation.

It is found in the cytoplasm. It carries out the reaction ATP + H2O = ADP + phosphate + H(+). In terms of biological role, DEAD-box RNA helicase involved in RNA degradation. Has RNA-dependent ATPase activity and unwinds double-stranded RNA. The polypeptide is ATP-dependent RNA helicase RhlB (Aeromonas hydrophila subsp. hydrophila (strain ATCC 7966 / DSM 30187 / BCRC 13018 / CCUG 14551 / JCM 1027 / KCTC 2358 / NCIMB 9240 / NCTC 8049)).